A 744-amino-acid chain; its full sequence is Cullin-1 (744 aa).

In terms of domain architecture, Cullin neddylation spans Asp-674–Asn-736.

The protein belongs to the cullin family. Part of a SCF (SKP1-CUL1-F-box protein) E3 ubiquitin-protein ligase complex. Is able to form the SCF complex together with SKP1 and the rice black streaked dwarf virus RBSDV protein P7-2. Interacts with D3. Neddylated (rubylated). Deneddylation occurs upon interaction with the COP9 signalosome (CSN) complex. Expressed in dry seeds and coleoptiles.

Functionally, involved in ubiquitination and subsequent proteasomal degradation of target proteins. This is Cullin-1 from Oryza sativa subsp. japonica (Rice).